A 345-amino-acid chain; its full sequence is S-adenosylmethionine:tRNA ribosyltransferase-isomerase (345 aa).

This sequence belongs to the QueA family. Monomer.

The protein localises to the cytoplasm. The enzyme catalyses 7-aminomethyl-7-carbaguanosine(34) in tRNA + S-adenosyl-L-methionine = epoxyqueuosine(34) in tRNA + adenine + L-methionine + 2 H(+). It participates in tRNA modification; tRNA-queuosine biosynthesis. Its function is as follows. Transfers and isomerizes the ribose moiety from AdoMet to the 7-aminomethyl group of 7-deazaguanine (preQ1-tRNA) to give epoxyqueuosine (oQ-tRNA). This is S-adenosylmethionine:tRNA ribosyltransferase-isomerase from Helicobacter acinonychis (strain Sheeba).